The chain runs to 433 residues: Trigger factor (433 aa).

Positions 161–246 (GDRVTMDFVG…AKKVEARDLP (86 aa)) constitute a PPIase FKBP-type domain.

Belongs to the FKBP-type PPIase family. Tig subfamily.

It is found in the cytoplasm. The enzyme catalyses [protein]-peptidylproline (omega=180) = [protein]-peptidylproline (omega=0). Its function is as follows. Involved in protein export. Acts as a chaperone by maintaining the newly synthesized protein in an open conformation. Functions as a peptidyl-prolyl cis-trans isomerase. The sequence is that of Trigger factor from Idiomarina loihiensis (strain ATCC BAA-735 / DSM 15497 / L2-TR).